The chain runs to 273 residues: Shikimate dehydrogenase (NADP(+)) (273 aa).

Shikimate is bound by residues 14–16 (SKS) and threonine 61. The active-site Proton acceptor is the lysine 65. Aspartate 77 contacts NADP(+). Residues asparagine 86 and aspartate 102 each coordinate shikimate. NADP(+)-binding positions include 127-131 (GAGGA), 151-156 (NRTGAR), and methionine 215. Tyrosine 217 contributes to the shikimate binding site. Glycine 239 contacts NADP(+).

The protein belongs to the shikimate dehydrogenase family. Homodimer.

The catalysed reaction is shikimate + NADP(+) = 3-dehydroshikimate + NADPH + H(+). It functions in the pathway metabolic intermediate biosynthesis; chorismate biosynthesis; chorismate from D-erythrose 4-phosphate and phosphoenolpyruvate: step 4/7. In terms of biological role, involved in the biosynthesis of the chorismate, which leads to the biosynthesis of aromatic amino acids. Catalyzes the reversible NADPH linked reduction of 3-dehydroshikimate (DHSA) to yield shikimate (SA). The chain is Shikimate dehydrogenase (NADP(+)) from Thioalkalivibrio sulfidiphilus (strain HL-EbGR7).